We begin with the raw amino-acid sequence, 134 residues long: NADH-quinone oxidoreductase subunit A (134 aa).

Helical transmembrane passes span 14 to 34 (FFMF…LSWI), 66 to 86 (FYLI…LYAW), and 96 to 116 (IGFS…FYLV).

Belongs to the complex I subunit 3 family. NDH-1 is composed of 13 different subunits. Subunits NuoA, H, J, K, L, M, N constitute the membrane sector of the complex.

It is found in the cell membrane. It catalyses the reaction a quinone + NADH + 5 H(+)(in) = a quinol + NAD(+) + 4 H(+)(out). Functionally, NDH-1 shuttles electrons from NADH, via FMN and iron-sulfur (Fe-S) centers, to quinones in the respiratory chain. The immediate electron acceptor for the enzyme in this species is believed to be ubiquinone. Couples the redox reaction to proton translocation (for every two electrons transferred, four hydrogen ions are translocated across the cytoplasmic membrane), and thus conserves the redox energy in a proton gradient. The chain is NADH-quinone oxidoreductase subunit A from Buchnera aphidicola subsp. Acyrthosiphon pisum (strain APS) (Acyrthosiphon pisum symbiotic bacterium).